A 62-amino-acid chain; its full sequence is Photosystem II reaction center protein Z (62 aa).

2 helical membrane passes run 8–28 (SVFALIAISTLLVIGVPVALA) and 41–61 (FSGVSLWIGSVFLVGILNSFI).

This sequence belongs to the PsbZ family. PSII is composed of 1 copy each of membrane proteins PsbA, PsbB, PsbC, PsbD, PsbE, PsbF, PsbH, PsbI, PsbJ, PsbK, PsbL, PsbM, PsbT, PsbY, PsbZ, Psb30/Ycf12, at least 3 peripheral proteins of the oxygen-evolving complex and a large number of cofactors. It forms dimeric complexes.

It is found in the plastid. Its subcellular location is the chloroplast thylakoid membrane. Its function is as follows. May control the interaction of photosystem II (PSII) cores with the light-harvesting antenna, regulates electron flow through the 2 photosystem reaction centers. PSII is a light-driven water plastoquinone oxidoreductase, using light energy to abstract electrons from H(2)O, generating a proton gradient subsequently used for ATP formation. The sequence is that of Photosystem II reaction center protein Z from Cryptomeria japonica (Japanese cedar).